Consider the following 587-residue polypeptide: 2-succinyl-5-enolpyruvyl-6-hydroxy-3-cyclohexene-1-carboxylate synthase (587 aa).

The protein belongs to the TPP enzyme family. MenD subfamily. Homodimer. Requires Mg(2+) as cofactor. Mn(2+) is required as a cofactor. The cofactor is thiamine diphosphate.

It carries out the reaction isochorismate + 2-oxoglutarate + H(+) = 5-enolpyruvoyl-6-hydroxy-2-succinyl-cyclohex-3-ene-1-carboxylate + CO2. The protein operates within quinol/quinone metabolism; 1,4-dihydroxy-2-naphthoate biosynthesis; 1,4-dihydroxy-2-naphthoate from chorismate: step 2/7. It participates in cofactor biosynthesis; phylloquinone biosynthesis. Its function is as follows. Catalyzes the thiamine diphosphate-dependent decarboxylation of 2-oxoglutarate and the subsequent addition of the resulting succinic semialdehyde-thiamine pyrophosphate anion to isochorismate to yield 2-succinyl-5-enolpyruvyl-6-hydroxy-3-cyclohexene-1-carboxylate (SEPHCHC). The chain is 2-succinyl-5-enolpyruvyl-6-hydroxy-3-cyclohexene-1-carboxylate synthase from Prochlorococcus marinus (strain MIT 9312).